The sequence spans 356 residues: Uroporphyrinogen decarboxylase (356 aa).

R33, A35, R37, R46, D82, Y159, S214, and H334 together coordinate coproporphyrinogen I. Positions 33, 35, and 37 each coordinate coproporphyrinogen III. Coproporphyrinogen III contacts are provided by D82, Y159, S214, and H334.

It belongs to the uroporphyrinogen decarboxylase family. In terms of assembly, homodimer.

It localises to the cytoplasm. It is found in the cytosol. The catalysed reaction is uroporphyrinogen III + 4 H(+) = coproporphyrinogen III + 4 CO2. It functions in the pathway porphyrin-containing compound metabolism; protoporphyrin-IX biosynthesis; coproporphyrinogen-III from 5-aminolevulinate: step 4/4. Functionally, catalyzes the decarboxylation of four acetate groups of uroporphyrinogen-III to yield coproporphyrinogen-III. The sequence is that of Uroporphyrinogen decarboxylase from Drosophila melanogaster (Fruit fly).